The chain runs to 335 residues: Tetraacyldisaccharide 4'-kinase (335 aa).

Residue 58–65 (TMGGAGKT) coordinates ATP.

This sequence belongs to the LpxK family.

It carries out the reaction a lipid A disaccharide + ATP = a lipid IVA + ADP + H(+). It functions in the pathway glycolipid biosynthesis; lipid IV(A) biosynthesis; lipid IV(A) from (3R)-3-hydroxytetradecanoyl-[acyl-carrier-protein] and UDP-N-acetyl-alpha-D-glucosamine: step 6/6. Functionally, transfers the gamma-phosphate of ATP to the 4'-position of a tetraacyldisaccharide 1-phosphate intermediate (termed DS-1-P) to form tetraacyldisaccharide 1,4'-bis-phosphate (lipid IVA). The protein is Tetraacyldisaccharide 4'-kinase of Caulobacter vibrioides (strain ATCC 19089 / CIP 103742 / CB 15) (Caulobacter crescentus).